A 656-amino-acid polypeptide reads, in one-letter code: UvrABC system protein B (656 aa).

The Helicase ATP-binding domain maps to 23 to 180 (EGIKKGYRFQ…QHLAKIGYER (158 aa)). An ATP-binding site is contributed by 36 to 43 (GVTGSGKT). The short motif at 89-112 (YYDYYQPEAYVPTKDLYIEKNADI) is the Beta-hairpin element. Residues 426–588 (QVDDLISEIK…ITPKTIVKPL (163 aa)) form the Helicase C-terminal domain. Residues 614–649 (EEYLSLLEEEMYRAASELRYEDAAKLRDEIFRLREE) form the UVR domain.

The protein belongs to the UvrB family. In terms of assembly, forms a heterotetramer with UvrA during the search for lesions. Interacts with UvrC in an incision complex.

Its subcellular location is the cytoplasm. The UvrABC repair system catalyzes the recognition and processing of DNA lesions. A damage recognition complex composed of 2 UvrA and 2 UvrB subunits scans DNA for abnormalities. Upon binding of the UvrA(2)B(2) complex to a putative damaged site, the DNA wraps around one UvrB monomer. DNA wrap is dependent on ATP binding by UvrB and probably causes local melting of the DNA helix, facilitating insertion of UvrB beta-hairpin between the DNA strands. Then UvrB probes one DNA strand for the presence of a lesion. If a lesion is found the UvrA subunits dissociate and the UvrB-DNA preincision complex is formed. This complex is subsequently bound by UvrC and the second UvrB is released. If no lesion is found, the DNA wraps around the other UvrB subunit that will check the other stand for damage. This Pseudothermotoga lettingae (strain ATCC BAA-301 / DSM 14385 / NBRC 107922 / TMO) (Thermotoga lettingae) protein is UvrABC system protein B.